A 65-amino-acid polypeptide reads, in one-letter code: Disintegrin CC8B (65 aa).

The 65-residue stretch at 1 to 65 folds into the Disintegrin domain; it reads NSAHPCCDPV…DCPRNPWHKS (65 aa). Intrachain disulfides connect Cys-6/Cys-29, Cys-20/Cys-26, Cys-25/Cys-50, and Cys-38/Cys-57. Residues 42–44 carry the Cell attachment site; atypical (WGD) motif; that stretch reads WGD.

Belongs to the disintegrin family. Dimeric disintegrin subfamily. As to quaternary structure, heterodimer with CC8A; disulfide-linked. As to expression, expressed by the venom gland.

It localises to the secreted. Functionally, inhibits integrins alpha-IIb/beta-3 (ITGA2B/ITGB3), alpha-V/beta-3 (ITGAV/ITGB3), and alpha-5/beta-1 (ITGA5/ITGB1). This chain is Disintegrin CC8B, found in Cerastes cerastes (Horned desert viper).